The sequence spans 234 residues: Endonuclease V (234 aa).

Residues aspartate 42 and aspartate 108 each contribute to the Mg(2+) site.

Belongs to the endonuclease V family. It depends on Mg(2+) as a cofactor.

Its subcellular location is the cytoplasm. It carries out the reaction Endonucleolytic cleavage at apurinic or apyrimidinic sites to products with a 5'-phosphate.. Its function is as follows. DNA repair enzyme involved in the repair of deaminated bases. Selectively cleaves double-stranded DNA at the second phosphodiester bond 3' to a deoxyinosine leaving behind the intact lesion on the nicked DNA. The sequence is that of Endonuclease V from Geotalea uraniireducens (strain Rf4) (Geobacter uraniireducens).